A 141-amino-acid polypeptide reads, in one-letter code: ATP synthase epsilon chain (141 aa).

It belongs to the ATPase epsilon chain family. In terms of assembly, F-type ATPases have 2 components, CF(1) - the catalytic core - and CF(0) - the membrane proton channel. CF(1) has five subunits: alpha(3), beta(3), gamma(1), delta(1), epsilon(1). CF(0) has three main subunits: a, b and c.

Its subcellular location is the cell inner membrane. Functionally, produces ATP from ADP in the presence of a proton gradient across the membrane. The chain is ATP synthase epsilon chain from Methylobacillus flagellatus (strain ATCC 51484 / DSM 6875 / VKM B-1610 / KT).